Here is a 684-residue protein sequence, read N- to C-terminus: Leishmanolysin-like peptidase (684 aa).

His257 provides a ligand contact to Zn(2+). The active site involves Glu258. His261 and His364 together coordinate Zn(2+).

It belongs to the peptidase M8 family. It depends on Zn(2+) as a cofactor.

It localises to the cytoplasm. Its function is as follows. Essential for the coordination of mitotic progression, and also plays a role in cell migration. The protein is Leishmanolysin-like peptidase of Drosophila pseudoobscura pseudoobscura (Fruit fly).